Consider the following 203-residue polypeptide: Glycerol-3-phosphate acyltransferase (203 aa).

6 consecutive transmembrane segments (helical) span residues methionine 1 to proline 21, valine 52 to valine 72, alanine 73 to isoleucine 93, isoleucine 115 to isoleucine 135, isoleucine 140 to glycine 160, and glutamine 161 to arginine 181.

This sequence belongs to the PlsY family. In terms of assembly, probably interacts with PlsX.

Its subcellular location is the cell inner membrane. The catalysed reaction is an acyl phosphate + sn-glycerol 3-phosphate = a 1-acyl-sn-glycero-3-phosphate + phosphate. It functions in the pathway lipid metabolism; phospholipid metabolism. Its function is as follows. Catalyzes the transfer of an acyl group from acyl-phosphate (acyl-PO(4)) to glycerol-3-phosphate (G3P) to form lysophosphatidic acid (LPA). This enzyme utilizes acyl-phosphate as fatty acyl donor, but not acyl-CoA or acyl-ACP. The chain is Glycerol-3-phosphate acyltransferase from Synechococcus sp. (strain JA-3-3Ab) (Cyanobacteria bacterium Yellowstone A-Prime).